Here is a 380-residue protein sequence, read N- to C-terminus: Erythronate-4-phosphate dehydrogenase (380 aa).

Substrate-binding residues include Ser-45 and Thr-66. Residues 126–127 (QV), Asp-146, Thr-174, 205–207 (ASR), and Asp-231 each bind NAD(+). Arg-207 is an active-site residue. Glu-236 is an active-site residue. His-253 (proton donor) is an active-site residue. Gly-256 lines the NAD(+) pocket. Tyr-257 provides a ligand contact to substrate.

This sequence belongs to the D-isomer specific 2-hydroxyacid dehydrogenase family. PdxB subfamily. In terms of assembly, homodimer.

The protein resides in the cytoplasm. It catalyses the reaction 4-phospho-D-erythronate + NAD(+) = (R)-3-hydroxy-2-oxo-4-phosphooxybutanoate + NADH + H(+). Its pathway is cofactor biosynthesis; pyridoxine 5'-phosphate biosynthesis; pyridoxine 5'-phosphate from D-erythrose 4-phosphate: step 2/5. Catalyzes the oxidation of erythronate-4-phosphate to 3-hydroxy-2-oxo-4-phosphonooxybutanoate. This is Erythronate-4-phosphate dehydrogenase from Pseudomonas syringae pv. syringae (strain B728a).